The chain runs to 233 residues: Ribonuclease 3 (233 aa).

Positions 4-126 (LNKLMERLGH…IVGAIYIDAG (123 aa)) constitute an RNase III domain. Glu-39 lines the Mg(2+) pocket. The active site involves Asp-43. Mg(2+)-binding residues include Asp-112 and Glu-115. The active site involves Glu-115. The DRBM domain occupies 153-222 (DAKSLLQEWL…AKRFLELLDD (70 aa)).

It belongs to the ribonuclease III family. In terms of assembly, homodimer. Mg(2+) serves as cofactor.

Its subcellular location is the cytoplasm. It catalyses the reaction Endonucleolytic cleavage to 5'-phosphomonoester.. Its function is as follows. Digests double-stranded RNA. Involved in the processing of primary rRNA transcript to yield the immediate precursors to the large and small rRNAs (23S and 16S). Processes some mRNAs, and tRNAs when they are encoded in the rRNA operon. Processes pre-crRNA and tracrRNA of type II CRISPR loci if present in the organism. The protein is Ribonuclease 3 of Coxiella burnetii (strain RSA 331 / Henzerling II).